The following is a 465-amino-acid chain: Gamma-aminobutyric acid receptor subunit rho-2 (465 aa).

An N-terminal signal peptide occupies residues M1–S20. Over R21–H260 the chain is Extracellular. R105 contributes to the 4-aminobutanoate binding site. N120 is a glycosylation site (N-linked (GlcNAc...) asparagine). S169 provides a ligand contact to 4-aminobutanoate. An intrachain disulfide couples C178 to C192. E197 contacts 4-aminobutanoate. N-linked (GlcNAc...) asparagine glycosylation occurs at N254. A helical membrane pass occupies residues I261–V281. At S282–R293 the chain is on the cytoplasmic side. Residues V294 to S314 form a helical membrane-spanning segment. The Extracellular portion of the chain corresponds to M315–D325. Residues I326–N346 form a helical membrane-spanning segment. Residues Y347–K443 are Cytoplasmic-facing. The helical transmembrane segment at Y444 to F464 threads the bilayer. Position 465 (S465) is a topological domain, extracellular.

Belongs to the ligand-gated ion channel (TC 1.A.9) family. Gamma-aminobutyric acid receptor (TC 1.A.9.5) subfamily. GABRR2 sub-subfamily. As to quaternary structure, three rho subunits (rho-1/GBRR1, rho-2/GBRR2 and rho-3/GBRR3) coassemble either to form functional homopentamers or heteropentamers. Rho-2 is unable to form a functional homopentamer. Interacts with SQSTM1. As to expression, expressed in spinal cord and in cerebellum. Expressed in retina.

The protein resides in the postsynaptic cell membrane. The protein localises to the cell membrane. The enzyme catalyses chloride(in) = chloride(out). In contrast with rho-1 and rho-3 homopentamers, rho-2 GABAARs are not inhibited by picrotoxin. Functionally, rho subunit of the pentameric ligand-gated chloride channels responsible for mediating the effects of gamma-aminobutyric acid (GABA), the major inhibitory neurotransmitter in the brain. Rho-containing GABA-gated chloride channels are a subclass of GABA(A) receptors (GABAARs) entirely composed of rho subunits, where GABA molecules bind at the rho intersubunit interfaces. When activated by GABA, rho-GABAARs selectively allow the flow of chloride anions across the cell membrane down their electrochemical gradient. Rho-2 GABAARs may contribute to the regulation of glial development in the cerebellum by controlling extrasynaptic transmission. Rho-2 GABAARs are also involved in neuronal tonic (extrasynaptic) and phasic (synaptic) transmission in the Purkinje neurons of the cerebellum. Rho-2 GABAARs expressed in retina may play a role in retinal neurotransmission. The sequence is that of Gamma-aminobutyric acid receptor subunit rho-2 from Rattus norvegicus (Rat).